The chain runs to 594 residues: Alanine--tRNA ligase (594 aa).

The Zn(2+) site is built by histidine 456, histidine 460, cysteine 558, and histidine 562.

This sequence belongs to the class-II aminoacyl-tRNA synthetase family. It depends on Zn(2+) as a cofactor.

The protein resides in the cytoplasm. The catalysed reaction is tRNA(Ala) + L-alanine + ATP = L-alanyl-tRNA(Ala) + AMP + diphosphate. Its function is as follows. Catalyzes the attachment of alanine to tRNA(Ala) in a two-step reaction: alanine is first activated by ATP to form Ala-AMP and then transferred to the acceptor end of tRNA(Ala). Also edits incorrectly charged Ser-tRNA(Ala) and Gly-tRNA(Ala) via its editing domain. In Borreliella burgdorferi (strain ATCC 35210 / DSM 4680 / CIP 102532 / B31) (Borrelia burgdorferi), this protein is Alanine--tRNA ligase (alaS).